The following is a 406-amino-acid chain: Putative nickel insertion protein (406 aa).

The protein belongs to the LarC family.

The sequence is that of Putative nickel insertion protein from Methanosphaera stadtmanae (strain ATCC 43021 / DSM 3091 / JCM 11832 / MCB-3).